The primary structure comprises 63 residues: Large ribosomal subunit protein uL29 (63 aa).

The protein belongs to the universal ribosomal protein uL29 family.

The sequence is that of Large ribosomal subunit protein uL29 from Salmonella agona (strain SL483).